We begin with the raw amino-acid sequence, 61 residues long: Large ribosomal subunit protein uL30 (61 aa).

Belongs to the universal ribosomal protein uL30 family. As to quaternary structure, part of the 50S ribosomal subunit.

This chain is Large ribosomal subunit protein uL30, found in Bifidobacterium adolescentis (strain ATCC 15703 / DSM 20083 / NCTC 11814 / E194a).